The primary structure comprises 428 residues: Stabilizer of axonemal microtubules 4 (428 aa).

Positions alanine 201–leucine 231 are disordered.

Microtubule inner protein component of sperm flagellar doublet microtubules. Interacts with PPP1CA.

Its subcellular location is the cell projection. The protein resides in the cilium. It is found in the cytoplasm. The protein localises to the cytoskeleton. It localises to the flagellum axoneme. This Bos taurus (Bovine) protein is Stabilizer of axonemal microtubules 4.